The chain runs to 554 residues: Chaperonin GroEL (554 aa).

Residues 30 to 33 (TLGP), Lys51, 87 to 91 (DGTTT), Gly415, 479 to 481 (NAA), and Asp495 each bind ATP.

It belongs to the chaperonin (HSP60) family. Forms a cylinder of 14 subunits composed of two heptameric rings stacked back-to-back. Interacts with the co-chaperonin GroES.

The protein localises to the cytoplasm. The enzyme catalyses ATP + H2O + a folded polypeptide = ADP + phosphate + an unfolded polypeptide.. Its function is as follows. Together with its co-chaperonin GroES, plays an essential role in assisting protein folding. The GroEL-GroES system forms a nano-cage that allows encapsulation of the non-native substrate proteins and provides a physical environment optimized to promote and accelerate protein folding. The protein is Chaperonin GroEL of Nitrosococcus oceani (strain ATCC 19707 / BCRC 17464 / JCM 30415 / NCIMB 11848 / C-107).